The primary structure comprises 499 residues: ATP synthase subunit beta, chloroplastic (499 aa).

An ATP-binding site is contributed by 170–177; the sequence is GGAGVGKT.

This sequence belongs to the ATPase alpha/beta chains family. As to quaternary structure, F-type ATPases have 2 components, CF(1) - the catalytic core - and CF(0) - the membrane proton channel. CF(1) has five subunits: alpha(3), beta(3), gamma(1), delta(1), epsilon(1). CF(0) has four main subunits: a(1), b(1), b'(1) and c(9-12).

It is found in the plastid. It localises to the chloroplast thylakoid membrane. It catalyses the reaction ATP + H2O + 4 H(+)(in) = ADP + phosphate + 5 H(+)(out). Its function is as follows. Produces ATP from ADP in the presence of a proton gradient across the membrane. The catalytic sites are hosted primarily by the beta subunits. This is ATP synthase subunit beta, chloroplastic from Ipomoea purpurea (Common morning glory).